A 491-amino-acid chain; its full sequence is Acetyl-coenzyme A carboxylase carboxyl transferase subunit beta (491 aa).

Residues 132–491 (LWNQCENCFI…ISELLNLHAL (360 aa)) enclose the CoA carboxyltransferase N-terminal domain. Zn(2+) contacts are provided by C136, C139, C155, and C158. The C4-type zinc-finger motif lies at 136-158 (CENCFIPNYKKVLKSNMQICEEC). A compositionally biased stretch (basic and acidic residues) spans 252–262 (EKVEEWTKPDL). Disordered regions lie at residues 252–273 (EKVE…DEER) and 279–298 (DKGE…EDDD). The segment covering 284 to 298 (SQEIEDSEANDEDDD) has biased composition (acidic residues).

This sequence belongs to the AccD/PCCB family. Acetyl-CoA carboxylase is a heterohexamer composed of biotin carboxyl carrier protein, biotin carboxylase and 2 subunits each of ACCase subunit alpha and ACCase plastid-coded subunit beta (accD). The cofactor is Zn(2+).

It is found in the plastid. The enzyme catalyses N(6)-carboxybiotinyl-L-lysyl-[protein] + acetyl-CoA = N(6)-biotinyl-L-lysyl-[protein] + malonyl-CoA. It participates in lipid metabolism; malonyl-CoA biosynthesis; malonyl-CoA from acetyl-CoA: step 1/1. In terms of biological role, component of the acetyl coenzyme A carboxylase (ACC) complex. Biotin carboxylase (BC) catalyzes the carboxylation of biotin on its carrier protein (BCCP) and then the CO(2) group is transferred by the transcarboxylase to acetyl-CoA to form malonyl-CoA. In Cuscuta gronovii (Common dodder), this protein is Acetyl-coenzyme A carboxylase carboxyl transferase subunit beta.